A 429-amino-acid polypeptide reads, in one-letter code: Phosphoribosylamine--glycine ligase (429 aa).

Residues 109–316 form the ATP-grasp domain; the sequence is KDFLARHKIP…LVELCLKACD (208 aa). 135–196 is a binding site for ATP; it reads LREKGTPIVV…EEFLDGEEAS (62 aa). 2 residues coordinate Mg(2+): Glu-286 and Asn-288.

It belongs to the GARS family. Mg(2+) serves as cofactor. Mn(2+) is required as a cofactor.

The catalysed reaction is 5-phospho-beta-D-ribosylamine + glycine + ATP = N(1)-(5-phospho-beta-D-ribosyl)glycinamide + ADP + phosphate + H(+). Its pathway is purine metabolism; IMP biosynthesis via de novo pathway; N(1)-(5-phospho-D-ribosyl)glycinamide from 5-phospho-alpha-D-ribose 1-diphosphate: step 2/2. The chain is Phosphoribosylamine--glycine ligase from Haemophilus influenzae (strain ATCC 51907 / DSM 11121 / KW20 / Rd).